The following is a 244-amino-acid chain: 3-deoxy-manno-octulosonate cytidylyltransferase (244 aa).

This sequence belongs to the KdsB family.

It localises to the cytoplasm. The catalysed reaction is 3-deoxy-alpha-D-manno-oct-2-ulosonate + CTP = CMP-3-deoxy-beta-D-manno-octulosonate + diphosphate. It participates in nucleotide-sugar biosynthesis; CMP-3-deoxy-D-manno-octulosonate biosynthesis; CMP-3-deoxy-D-manno-octulosonate from 3-deoxy-D-manno-octulosonate and CTP: step 1/1. The protein operates within bacterial outer membrane biogenesis; lipopolysaccharide biosynthesis. In terms of biological role, activates KDO (a required 8-carbon sugar) for incorporation into bacterial lipopolysaccharide in Gram-negative bacteria. This Anaeromyxobacter sp. (strain Fw109-5) protein is 3-deoxy-manno-octulosonate cytidylyltransferase.